The chain runs to 204 residues: uncharacterized protein (204 aa).

Catalysis depends on H9, which acts as the Tele-phosphohistidine intermediate. Residue E86 is the Proton donor/acceptor of the active site.

It belongs to the phosphoglycerate mutase family.

This is an uncharacterized protein from Acanthamoeba polyphaga (Amoeba).